We begin with the raw amino-acid sequence, 960 residues long: Leucine--tRNA ligase (960 aa).

The short motif at 71-82 is the 'HIGH' region element; that stretch reads PYPSGAGLHVGH. The 'KMSKS' region motif lies at 729–733; sequence KMGKS. Lys-732 provides a ligand contact to ATP.

This sequence belongs to the class-I aminoacyl-tRNA synthetase family.

The protein resides in the cytoplasm. The enzyme catalyses tRNA(Leu) + L-leucine + ATP = L-leucyl-tRNA(Leu) + AMP + diphosphate. The protein is Leucine--tRNA ligase of Corynebacterium diphtheriae (strain ATCC 700971 / NCTC 13129 / Biotype gravis).